Consider the following 454-residue polypeptide: 5-hydroxytryptamine receptor 3D (454 aa).

A signal peptide spans 1–24 (MQKHSPGPPALALLSQSLLTTGNG). The Extracellular portion of the chain corresponds to 25 to 232 (DTLIINCPGF…IRRRCRPSPY (208 aa)). N-linked (GlcNAc...) asparagine glycosylation is present at asparagine 66. Residues 233–253 (VVNFLVPSGILIAIDALSFYL) form a helical membrane-spanning segment. Residues 254–264 (PLESGNCAPFK) are Cytoplasmic-facing. The helical transmembrane segment at 265 to 285 (MTVLLGYSVFLLMMNDLLPAT) threads the bilayer. At 286-306 (STSSHASLVAPLALMQTPLPA) the chain is on the extracellular side. A helical membrane pass occupies residues 307–327 (GVYFALCLSLMVGSLLETIFI). Residues 328 to 431 (THLLHVATTQ…WVQFSHAMDA (104 aa)) lie on the Cytoplasmic side of the membrane. The tract at residues 363 to 410 (PQKGNKGPGLTPTHLPGVKEPEVSAGQMPGPGEAELTGGSEWTRAQRE) is disordered. Positions 399-430 (TGGSEWTRAQREHEAQKQHSVELWVQFSHAMD) are HA-stretch; determines single-channel conductance in 5-HT3 receptors. Residues 432 to 452 (LLFRLYLLFMASSIITVICLW) form a helical membrane-spanning segment. The Extracellular segment spans residues 453–454 (NT).

This sequence belongs to the ligand-gated ion channel (TC 1.A.9) family. 5-hydroxytryptamine receptor (TC 1.A.9.2) subfamily. HTR3D sub-subfamily. Forms homopentameric as well as heteropentameric serotonin-activated cation-selective channel complexes with HTR3A. The homomeric complex is not functional. Heteropentameric complexes display properties which resemble that of neuronal serotonin-activated channels in vivo. In terms of tissue distribution, expressed in liver, as well as fetal and adult colon and kidney.

Its subcellular location is the postsynaptic cell membrane. The protein resides in the cell membrane. It carries out the reaction Na(+)(in) = Na(+)(out). The enzyme catalyses K(+)(in) = K(+)(out). The catalysed reaction is Ca(2+)(in) = Ca(2+)(out). Functionally, forms serotonin (5-hydroxytryptamine/5-HT3)-activated cation-selective channel complexes, which when activated cause fast, depolarizing responses in neurons. This chain is 5-hydroxytryptamine receptor 3D, found in Homo sapiens (Human).